We begin with the raw amino-acid sequence, 315 residues long: MSSAATALQGPQPNALPAASHLDRLEAESIHILREVAAEFDNPVMLYSVGKDSSVMLHLARKAFHPGTPPFPLLHVDTTWKFREMIAFRDRMAAESGMALRVHINQEGVARGIGPFSHGSAVHTDVMKTQALKQALDRYGFDAAFGGARRDEEASRAKERVYSFRDRHHRWDPKAQRPELWNVYNGRIHKGESIRVFPLSNWTELDIWLYIHREGIPVVPLYFAAERPVVERDGLLIMVDDDRLPLAPGEIPRLERVRFRTLGCYPLTGAIRSEARSVPEIIAEMLDSSSSERQGRAIDHDQSGSMERKKREGYF.

The disordered stretch occupies residues 287–315 (DSSSSERQGRAIDHDQSGSMERKKREGYF). Residues 293–315 (RQGRAIDHDQSGSMERKKREGYF) are compositionally biased toward basic and acidic residues.

This sequence belongs to the PAPS reductase family. CysD subfamily. As to quaternary structure, heterodimer composed of CysD, the smaller subunit, and CysN.

The enzyme catalyses sulfate + ATP + H(+) = adenosine 5'-phosphosulfate + diphosphate. Its pathway is sulfur metabolism; hydrogen sulfide biosynthesis; sulfite from sulfate: step 1/3. Its function is as follows. With CysN forms the ATP sulfurylase (ATPS) that catalyzes the adenylation of sulfate producing adenosine 5'-phosphosulfate (APS) and diphosphate, the first enzymatic step in sulfur assimilation pathway. APS synthesis involves the formation of a high-energy phosphoric-sulfuric acid anhydride bond driven by GTP hydrolysis by CysN coupled to ATP hydrolysis by CysD. In Alkalilimnicola ehrlichii (strain ATCC BAA-1101 / DSM 17681 / MLHE-1), this protein is Sulfate adenylyltransferase subunit 2 1.